A 101-amino-acid polypeptide reads, in one-letter code: Doublesex- and mab-3-related transcription factor 1 (101 aa).

Positions 1 to 13 form a DNA-binding region, DM; it reads SLIAERQRVMAAQ. Residues 52-75 are compositionally biased toward low complexity; the sequence is CLLLESSSPTHSTSTVTTVSTSPS. A disordered region spans residues 52 to 79; that stretch reads CLLLESSSPTHSTSTVTTVSTSPSEGRM.

The protein belongs to the DMRT family.

It is found in the nucleus. May be required for testis development. This chain is Doublesex- and mab-3-related transcription factor 1 (DMRT1), found in Alligator mississippiensis (American alligator).